Reading from the N-terminus, the 305-residue chain is 2-oxoacid:ferredoxin oxidoreductase subunit beta (305 aa).

[4Fe-4S] cluster contacts are provided by cysteine 12, cysteine 15, and cysteine 46. Thiamine diphosphate-binding positions include 44–47 (IGCS) and histidine 65. Aspartate 90 provides a ligand contact to Mg(2+). 91–92 (GD) is a thiamine diphosphate binding site. Positions 118 and 120 each coordinate Mg(2+). 122–123 (GL) contributes to the thiamine diphosphate binding site. Cysteine 197 is a [4Fe-4S] cluster binding site.

As to quaternary structure, heterodimer composed of an alpha and a beta subunit. Requires [4Fe-4S] cluster as cofactor. It depends on thiamine diphosphate as a cofactor. The cofactor is Mg(2+).

It is found in the cytoplasm. The catalysed reaction is a 2-oxocarboxylate + 2 oxidized [2Fe-2S]-[ferredoxin] + CoA = an acyl-CoA + 2 reduced [2Fe-2S]-[ferredoxin] + CO2 + H(+). Functionally, catalyzes the coenzyme A-dependent oxidative decarboxylation of different 2-oxoacids such as 2-oxoglutarate, pyruvate and 2-oxobutyrate to form their CoA derivatives. In Sulfolobus sp, this protein is 2-oxoacid:ferredoxin oxidoreductase subunit beta.